The following is a 173-amino-acid chain: Protein C2 (173 aa).

The segment at 69 to 85 is a zinc-finger region; it reads CNCHFTIHHECNRGFSH.

Belongs to the geminiviridae transcriptional activator protein family. In terms of assembly, monomer. Interacting with and inactivating host adenosine kinase 2 (ADK2) in the cytoplasm. Interacts with and inhibits host SNF1 kinase.

Its subcellular location is the host cytoplasm. Acts as a suppressor of RNA-mediated gene silencing, also known as post-transcriptional gene silencing (PTGS), a mechanism of plant viral defense that limits the accumulation of viral RNAs. Suppresses the host RNA silencing by inhibiting adenosine kinase 2 (ADK2), a kinase involved in a general methylation pathway. Also suppresses the host basal defense by interacting with and inhibiting SNF1 kinase, a key regulator of cell metabolism implicated in innate antiviral defense. Determines pathogenicity. The sequence is that of Protein C2 from Beet curly top virus (strain California/Logan) (BCTV).